The primary structure comprises 217 residues: Large ribosomal subunit protein uL4 (217 aa).

A disordered region spans residues 58–90 (TAATKGRSDVSGGGKKPWRQKGTGRARSGTSRS).

The protein belongs to the universal ribosomal protein uL4 family. Part of the 50S ribosomal subunit.

One of the primary rRNA binding proteins, this protein initially binds near the 5'-end of the 23S rRNA. It is important during the early stages of 50S assembly. It makes multiple contacts with different domains of the 23S rRNA in the assembled 50S subunit and ribosome. Its function is as follows. Forms part of the polypeptide exit tunnel. In Syntrophus aciditrophicus (strain SB), this protein is Large ribosomal subunit protein uL4.